The sequence spans 619 residues: Sodium-dependent dopamine transporter (619 aa).

Residues 1–56 (MSKSKCSVGPMSSVVAPAKESNAVGPREVELILVKEQNGVQLTNSTLINPPQTPVE) are Cytoplasmic-facing. Residues 57–95 (AQERETWSKKIDFLLSVIGFAVDLANVWRFPYLCYKNGG) form a discontinuously helical membrane-spanning segment. Na(+) contacts are provided by G75, A77, V78, D79, and N82. D79 is a binding site for dopamine. 2 helical membrane-spanning segments follow: residues 96-127 (GAFL…NREG) and 128-171 (AAGV…FSSF). 2 residues coordinate dopamine: S149 and G153. Residues 172–235 (TMDLPWIHCN…SRGIDDLGPP (64 aa)) are Extracellular-facing. C180 and C189 are oxidised to a cystine. 4 N-linked (GlcNAc...) asparagine glycosylation sites follow: N181, N188, N196, and N204. 2 consecutive transmembrane segments (helical) span residues 236-255 (RWQL…FSLW) and 256-286 (KGVK…GVTL). Residues 287–305 (PGAMDGIRAYLSVDFYRLC) are Extracellular-facing. Residues 306 to 334 (EASVWIDAATQVCFSLGVGFGVLIAFSSY) form a discontinuously helical membrane-spanning segment. Q316 lines the chloride pocket. F319 contacts dopamine. Na(+) contacts are provided by S320 and N352. S320 contributes to the chloride binding site. Residues 335–375 (NKFTNNCYRDAIITTSINSLTSFSSGFVVFSFLGYMAQKHN) form a helical membrane-spanning segment. Position 356 (S356) interacts with chloride. Topologically, residues 376 to 399 (VPIRDVATDGPGLIFIIYPEAIAT) are extracellular. 3 helical membrane-spanning segments follow: residues 400–441 (LPLS…QLLH), 442–465 (RHRE…CVTN), and 466–498 (GGIY…AWFY). Positions 417, 420, and 421 each coordinate Na(+). Residues S421 and A422 each coordinate dopamine. Topologically, residues 499 to 515 (GVQQFSDDIKQMTGQRP) are cytoplasmic. A helical membrane pass occupies residues 516–541 (NLYWRLCWKLVSPCFLLYVVVVSIVT). The Extracellular segment spans residues 542–552 (FRPPHYGAYIF). Residues 553–582 (PDWANALGWIIATSSMAMVPIYATYKFCSL) traverse the membrane as a helical segment. The tract at residues 560-589 (GWIIATSSMAMVPIYATYKFCSLPGSFREK) is interaction with TGFB1I1. At 583-619 (PGSFREKLAYAITPEKDHQLVDRGEVRQFTLRHWLLL) the chain is on the cytoplasmic side.

This sequence belongs to the sodium:neurotransmitter symporter (SNF) (TC 2.A.22) family. SLC6A3 subfamily. Monomer. Homooligomer; disulfide-linked. Interacts with PRKCABP and TGFB1I1. Interacts (via N-terminus) with SYNGR3 (via N-terminus). Interacts with SLC18A2. Interacts with TOR1A (ATP-bound); TOR1A regulates SLC6A3 subcellular location. Interacts with alpha-synuclein/SNCA. Interacts with SEPTIN4. As to expression, brain. Expressed in the substantia nigra and ventral tegmental area, regions that contain dopaminergic cell bodies.

It localises to the cell membrane. The protein localises to the cell projection. Its subcellular location is the neuron projection. It is found in the axon. It catalyses the reaction dopamine(out) + chloride(out) + Na(+)(out) = dopamine(in) + chloride(in) + Na(+)(in). It carries out the reaction (R)-noradrenaline(out) + chloride(out) + Na(+)(out) = (R)-noradrenaline(in) + chloride(in) + Na(+)(in). The catalysed reaction is dopamine(out) + chloride(out) + 2 Na(+)(out) = dopamine(in) + chloride(in) + 2 Na(+)(in). Inhibited by mazindol, cocaine, desipramine, GBR 12783 dihydrochloride, GBR 12909 dihydrochloride and nomifensine. Inhibited by zinc ions. Mediates sodium- and chloride-dependent transport of dopamine. Also mediates sodium- and chloride-dependent transport of norepinephrine (also known as noradrenaline). Regulator of light-dependent retinal hyaloid vessel regression, downstream of OPN5 signaling. The sequence is that of Sodium-dependent dopamine transporter (Slc6a3) from Rattus norvegicus (Rat).